An 82-amino-acid chain; its full sequence is Small ribosomal subunit protein eS21z (82 aa).

Met-1 bears the N-acetylmethionine mark.

This sequence belongs to the eukaryotic ribosomal protein eS21 family.

This is Small ribosomal subunit protein eS21z (RPS21B) from Arabidopsis thaliana (Mouse-ear cress).